A 218-amino-acid polypeptide reads, in one-letter code: Pyridoxine/pyridoxamine 5'-phosphate oxidase (218 aa).

Residues 14 to 17 (RREY) and Lys-72 each bind substrate. FMN-binding positions include 67–72 (RIVLLK), 82–83 (YT), Arg-88, Lys-89, and Gln-111. 3 residues coordinate substrate: Tyr-129, Arg-133, and Ser-137. Residues 146-147 (QS) and Trp-191 contribute to the FMN site. 197 to 199 (RLH) contributes to the substrate binding site. Residue Arg-201 coordinates FMN.

This sequence belongs to the pyridoxamine 5'-phosphate oxidase family. As to quaternary structure, homodimer. FMN serves as cofactor.

It carries out the reaction pyridoxamine 5'-phosphate + O2 + H2O = pyridoxal 5'-phosphate + H2O2 + NH4(+). It catalyses the reaction pyridoxine 5'-phosphate + O2 = pyridoxal 5'-phosphate + H2O2. The protein operates within cofactor metabolism; pyridoxal 5'-phosphate salvage; pyridoxal 5'-phosphate from pyridoxamine 5'-phosphate: step 1/1. It functions in the pathway cofactor metabolism; pyridoxal 5'-phosphate salvage; pyridoxal 5'-phosphate from pyridoxine 5'-phosphate: step 1/1. Its function is as follows. Catalyzes the oxidation of either pyridoxine 5'-phosphate (PNP) or pyridoxamine 5'-phosphate (PMP) into pyridoxal 5'-phosphate (PLP). The chain is Pyridoxine/pyridoxamine 5'-phosphate oxidase from Escherichia coli O139:H28 (strain E24377A / ETEC).